Consider the following 136-residue polypeptide: MIEESKENSLKYFLIQSVASVIFLASILNQSFSFLIPFALLIKIGAAPFHMWLVSISKSMSWKVLSLLMTFQKIGPLLGLAMLSSVSHLSWLMVNMSSFLLMLVYYVTYLAILYFAVILLQQTPMYSLAQMNSNAS.

Transmembrane regions (helical) follow at residues 12–32 (YFLIQSVASVIFLASILNQSF), 34–54 (FLIPFALLIKIGAAPFHMWLV), 74–94 (IGPLLGLAMLSSVSHLSWLMV), and 99–119 (FLLMLVYYVTYLAILYFAVIL).

Belongs to the complex I subunit 2 family.

Its subcellular location is the mitochondrion inner membrane. The catalysed reaction is a ubiquinone + NADH + 5 H(+)(in) = a ubiquinol + NAD(+) + 4 H(+)(out). Its function is as follows. Core subunit of the mitochondrial membrane respiratory chain NADH dehydrogenase (Complex I) that is believed to belong to the minimal assembly required for catalysis. Complex I functions in the transfer of electrons from NADH to the respiratory chain. The immediate electron acceptor for the enzyme is believed to be ubiquinone. This is NADH-ubiquinone oxidoreductase chain 2 (ND2) from Artemia salina (Brine shrimp).